The following is a 495-amino-acid chain: Potassium voltage-gated channel subfamily A member 1 (495 aa).

The interval methionine 1–histidine 30 is disordered. Residues methionine 1–glutamate 128 are tetramerization domain. Over methionine 1–glycine 164 the chain is Cytoplasmic. Serine 23 bears the Phosphoserine mark. A helical transmembrane segment spans residues proline 165 to leucine 186. The Extracellular portion of the chain corresponds to glutamate 187–proline 220. The N-linked (GlcNAc...) asparagine glycan is linked to asparagine 207. The chain crosses the membrane as a helical span at residues phenylalanine 221–alanine 242. A lipid anchor (S-palmitoyl cysteine) is attached at cysteine 243. Residues cysteine 243–isoleucine 253 lie on the Cytoplasmic side of the membrane. Residues methionine 254 to alanine 274 traverse the membrane as a helical segment. At glutamate 275–serine 287 the chain is on the extracellular side. Residues leucine 288–histidine 308 form a helical; Voltage-sensor membrane-spanning segment. At serine 309–methionine 323 the chain is on the cytoplasmic side. The S4-S5 linker stretch occupies residues lysine 310–methionine 323. Serine 322 carries the phosphoserine; by PKA modification. Residues arginine 324–tyrosine 345 traverse the membrane as a helical segment. The Extracellular segment spans residues phenylalanine 346–isoleucine 359. An intramembrane region (helical) is located at residues proline 360–threonine 371. Positions threonine 372–aspartate 377 match the Selectivity filter motif. An intramembrane segment occupies threonine 372 to tyrosine 379. Residues proline 380–lysine 386 lie on the Extracellular side of the membrane. The chain crosses the membrane as a helical span at residues isoleucine 387–tyrosine 415. Topologically, residues histidine 416–valine 495 are cytoplasmic. A phosphoserine mark is found at serine 437 and serine 439. The residue at position 446 (serine 446) is a Phosphoserine; by PKA. A PDZ-binding motif is present at residues threonine 493–valine 495.

This sequence belongs to the potassium channel family. A (Shaker) (TC 1.A.1.2) subfamily. Kv1.1/KCNA1 sub-subfamily. In terms of assembly, homotetramer and heterotetramer with other channel-forming alpha subunits, such as KCNA2, KCNA4, KCNA5, KCNA6 and KCNA7. Channel activity is regulated by interaction with the beta subunits KCNAB1 and KCNAB2. Identified in a complex with KCNA2 and KCNAB2. Interacts (via C-terminus) with the PDZ domains of DLG1, DLG2 and DLG4. Interacts with LGI1 within a complex containing LGI1, KCNA4 and KCNAB1. Interacts (via cytoplasmic N-terminal domain) with KCNRG; this inhibits channel activity. Interacts with ANK3; this inhibits channel activity. Interacts (via N-terminus) with STX1A; this promotes channel inactivation. Interacts (via N-terminus) with the heterodimer formed by GNB1 and GNG2; this promotes channel inactivation. Can interact simultaneously with STX1A and the heterodimer formed by GNB1 and GNG2. Interacts with ADAM11. Palmitoylated on Cys-243; which may be required for membrane targeting. In terms of processing, N-glycosylated. Post-translationally, phosphorylated on tyrosine residues. Phosphorylation increases in response to NRG1; this inhibits channel activity. Phosphorylated by PKA. Phosphorylation at Ser-446 regulates channel activity by down-regulating expression at the cell membrane. As to expression, detected in hippocampus, in the middle third of the molecular layer of the dentate gyrus and in stratum radiatum and stratum oriens. Detected in the mossy fiber zone in the hippocampus CA3 region, at or near axon terminals. Detected in brain cortex, at basket cell terminals. Detected adjacent to nodes of Ranvier in juxtaparanodal zones in spinal cord nerve fibers, but also in paranodal regions in some myelinated spinal cord axons. Detected in juxtaparanodal regions adjacent to the nodes of Ranvier in myelinated axons in cerebellar white matter. Detected in sensory neurons. Detected in neurons from the medial nucleus of the trapezoid body. Detected in basolateral amygdala. Detected in the paraventricular nucleus of the hypothalamus. Detected in the islet of Langerhans (at protein level).

The protein resides in the cell membrane. Its subcellular location is the membrane. It localises to the cell projection. It is found in the axon. The protein localises to the cytoplasmic vesicle. The protein resides in the perikaryon. Its subcellular location is the endoplasmic reticulum. It localises to the dendrite. It is found in the cell junction. The protein localises to the synapse. The protein resides in the presynapse. Its subcellular location is the presynaptic cell membrane. It catalyses the reaction K(+)(in) = K(+)(out). With respect to regulation, inhibited by 4-aminopyridine (4-AP) and by tetraethylammonium (TEA). Inhibited by kaliotoxin (KTX). Functionally, voltage-gated potassium channel that mediates transmembrane potassium transport in excitable membranes, primarily in the brain and the central nervous system, but also in the kidney. Contributes to the regulation of the membrane potential and nerve signaling, and prevents neuronal hyperexcitability. Forms tetrameric potassium-selective channels through which potassium ions pass in accordance with their electrochemical gradient. The channel alternates between opened and closed conformations in response to the voltage difference across the membrane. Can form functional homotetrameric channels and heterotetrameric channels that contain variable proportions of KCNA1, KCNA2, KCNA4, KCNA5, KCNA6, KCNA7, and possibly other family members as well; channel properties depend on the type of alpha subunits that are part of the channel. Channel properties are modulated by cytoplasmic beta subunits that regulate the subcellular location of the alpha subunits and promote rapid inactivation of delayed rectifier potassium channels. In vivo, membranes probably contain a mixture of heteromeric potassium channel complexes, making it difficult to assign currents observed in intact tissues to any particular potassium channel family member. Homotetrameric KCNA1 forms a delayed-rectifier potassium channel that opens in response to membrane depolarization, followed by slow spontaneous channel closure. In contrast, a heterotetrameric channel formed by KCNA1 and KCNA4 shows rapid inactivation. Regulates neuronal excitability in hippocampus, especially in mossy fibers and medial perforant path axons, preventing neuronal hyperexcitability. Response to toxins that are selective for KCNA1, respectively for KCNA2, suggests that heteromeric potassium channels composed of both KCNA1 and KCNA2 play a role in pacemaking and regulate the output of deep cerebellar nuclear neurons. May function as down-stream effector for G protein-coupled receptors and inhibit GABAergic inputs to basolateral amygdala neurons. May contribute to the regulation of neurotransmitter release, such as gamma-aminobutyric acid (GABA) release. Plays a role in regulating the generation of action potentials and preventing hyperexcitability in myelinated axons of the vagus nerve, and thereby contributes to the regulation of heart contraction. Required for normal neuromuscular responses. Regulates the frequency of neuronal action potential firing in response to mechanical stimuli, and plays a role in the perception of pain caused by mechanical stimuli, but does not play a role in the perception of pain due to heat stimuli. Required for normal responses to auditory stimuli and precise location of sound sources, but not for sound perception. The use of toxins that block specific channels suggest that it contributes to the regulation of the axonal release of the neurotransmitter dopamine. Required for normal postnatal brain development and normal proliferation of neuronal precursor cells in the brain. Plays a role in the reabsorption of Mg(2+) in the distal convoluted tubules in the kidney and in magnesium ion homeostasis, probably via its effect on the membrane potential. This Rattus norvegicus (Rat) protein is Potassium voltage-gated channel subfamily A member 1.